Reading from the N-terminus, the 120-residue chain is Superoxide dismutase [Cu-Zn] (120 aa).

3 residues coordinate Cu cation: histidine 11, histidine 13, and histidine 28. The segment at 16-52 is disordered; the sequence is GDTTNGCMSTGPHFNPTGKEHGAPQDENRHAGDLGNI. Cysteine 22 and cysteine 112 are oxidised to a cystine. Residues histidine 28, histidine 36, histidine 45, and aspartate 48 each coordinate Zn(2+). A compositionally biased stretch (basic and acidic residues) spans 33–47; that stretch reads GKEHGAPQDENRHAG. Histidine 85 is a binding site for Cu cation.

The protein belongs to the Cu-Zn superoxide dismutase family. Homodimer. The cofactor is Cu cation. Zn(2+) serves as cofactor.

Its subcellular location is the cytoplasm. The catalysed reaction is 2 superoxide + 2 H(+) = H2O2 + O2. Functionally, destroys radicals which are normally produced within the cells and which are toxic to biological systems. The chain is Superoxide dismutase [Cu-Zn] (sodC) from Aspergillus japonicus.